The following is a 313-amino-acid chain: Acetaldehyde dehydrogenase 2 (313 aa).

12-15 (SGNI) is an NAD(+) binding site. The Acyl-thioester intermediate role is filled by C132. NAD(+)-binding positions include 163-171 (SAGPGTRAN) and N287.

It belongs to the acetaldehyde dehydrogenase family.

The catalysed reaction is acetaldehyde + NAD(+) + CoA = acetyl-CoA + NADH + H(+). The protein is Acetaldehyde dehydrogenase 2 (amnH) of Paraburkholderia xenovorans (strain LB400).